A 211-amino-acid chain; its full sequence is Protein-L-isoaspartate O-methyltransferase (211 aa).

Ser60 is a catalytic residue.

This sequence belongs to the methyltransferase superfamily. L-isoaspartyl/D-aspartyl protein methyltransferase family.

The protein resides in the cytoplasm. The catalysed reaction is [protein]-L-isoaspartate + S-adenosyl-L-methionine = [protein]-L-isoaspartate alpha-methyl ester + S-adenosyl-L-homocysteine. Its function is as follows. Catalyzes the methyl esterification of L-isoaspartyl residues in peptides and proteins that result from spontaneous decomposition of normal L-aspartyl and L-asparaginyl residues. It plays a role in the repair and/or degradation of damaged proteins. The polypeptide is Protein-L-isoaspartate O-methyltransferase (Hahella chejuensis (strain KCTC 2396)).